The chain runs to 474 residues: Dihydrolipoyl dehydrogenase (474 aa).

Residues 34-51 (EGNP…GGTC), K60, and G124 each bind FAD. A disulfide bridge connects residues C51 and C56. Residues 189-193 (GAGVI), E212, V246, and 278-281 (SVGR) each bind NAD(+). The FAD site is built by D321 and A329. The Proton acceptor role is filled by H453.

It belongs to the class-I pyridine nucleotide-disulfide oxidoreductase family. FAD is required as a cofactor.

The protein localises to the cytoplasm. The enzyme catalyses N(6)-[(R)-dihydrolipoyl]-L-lysyl-[protein] + NAD(+) = N(6)-[(R)-lipoyl]-L-lysyl-[protein] + NADH + H(+). Its function is as follows. The branched-chain alpha-keto dehydrogenase complex catalyzes the overall conversion of alpha-keto acids to acyl-CoA and CO(2). It contains multiple copies of 3 enzymatic components: branched-chain alpha-keto acid decarboxylase (E1), lipoamide acyltransferase (E2) and lipoamide dehydrogenase (E3). This Cupriavidus necator (strain ATCC 17699 / DSM 428 / KCTC 22496 / NCIMB 10442 / H16 / Stanier 337) (Ralstonia eutropha) protein is Dihydrolipoyl dehydrogenase (odhL).